The sequence spans 146 residues: UPF0742 protein C1348.03 (146 aa).

The helical transmembrane segment at 38 to 60 threads the bilayer; that stretch reads LTVKYCLAVKLLIYLLYCWYIYS.

It belongs to the UPF0742 family.

The protein localises to the cytoplasm. Its subcellular location is the nucleus membrane. This chain is UPF0742 protein C1348.03, found in Schizosaccharomyces pombe (strain 972 / ATCC 24843) (Fission yeast).